Here is a 344-residue protein sequence, read N- to C-terminus: Interferon gamma receptor 1-like (344 aa).

Residues 1-22 (MSKHAVVQFGVVYALLFPGVFG) form the signal peptide. Over 23–229 (FVPSPTNVSV…QPTPETDKTG (207 aa)) the chain is Extracellular. Residues 24–102 (VPSPTNVSVV…TAHDGQEKSE (79 aa)) enclose the Fibronectin type-III domain. N-linked (GlcNAc...) asparagine glycosylation is found at N29, N44, N132, and N189. Residues 230–250 (IIAALIGGATVVLFIIMGFVW) traverse the membrane as a helical segment. The Cytoplasmic segment spans residues 251–344 (LLWRKWSNIP…SSDYDRPKFL (94 aa)). The disordered stretch occupies residues 300–344 (TEEDQSVSARDDTGADPPVVSEEGMAGEDSQGLGCSSDYDRPKFL).

It belongs to the type II cytokine receptor family. Highly expressed in brain. Also detected in spleen, heart, intestine, gill and kidney. In immune cell populations, detected at low levels in monocytes, peripheral blood leukocytes, splenocytes, neutrophils and mature macrophages.

It is found in the cell membrane. Receptor which shows binding specificity for the cytokine ifng1 (interferon gamma 1). In Carassius auratus (Goldfish), this protein is Interferon gamma receptor 1-like.